The following is a 103-amino-acid chain: Muscarinic toxin BM14 (103 aa).

The N-terminal stretch at 1–21 is a signal peptide; sequence MKTLLLTLVVVTIICLDLGYT. 5 disulfide bridges follow: C24/C45, C27/C37, C38/C72, C76/C90, and C91/C96.

This sequence belongs to the three-finger toxin family. Ancestral subfamily. Orphan group XVII sub-subfamily. As to expression, expressed by the venom gland.

It is found in the secreted. Functionally, this toxin inhibits the binding of [3H]quinuclidinyl benzilate to the M2 muscarinic acetylcholine (mAchR) receptor subtype (CHRM2). This chain is Muscarinic toxin BM14, found in Bungarus multicinctus (Many-banded krait).